Reading from the N-terminus, the 55-residue chain is Large ribosomal subunit protein bL33 (55 aa).

This sequence belongs to the bacterial ribosomal protein bL33 family.

The sequence is that of Large ribosomal subunit protein bL33 from Polaromonas sp. (strain JS666 / ATCC BAA-500).